We begin with the raw amino-acid sequence, 322 residues long: Endochitinase (322 aa).

An N-terminal signal peptide occupies residues 1-21 (MKMRYCVLVSVLAILVIRGSA). A Chitin-binding type-1 domain is found at 22-62 (ENCGRQAGGALCPGGQCCSKWGWCGTTPDHCGTDCQSQCGG). 4 cysteine pairs are disulfide-bonded: Cys-24-Cys-39, Cys-33-Cys-45, Cys-38-Cys-52, and Cys-56-Cys-60.

It belongs to the glycosyl hydrolase 19 family. Chitinase class I subfamily.

It catalyses the reaction Random endo-hydrolysis of N-acetyl-beta-D-glucosaminide (1-&gt;4)-beta-linkages in chitin and chitodextrins.. Defense against chitin-containing fungal pathogens. This is Endochitinase from Actinidia chinensis var. chinensis (Chinese soft-hair kiwi).